We begin with the raw amino-acid sequence, 181 residues long: MASSMFSSTAVVTSPAQATMVAPFTGLKSSASFPVTRKANNDITSITSNGGRVSCMKVWPPIGKKKFETLSYLPDLSDVELAKEVDYLLRNKWIPCVEFELEHGFVYREHGNTPGYYDGRYWTMWKLPLFGCTDSAQVLKEVEECKKEYPGAFIRIIGFDNTRQVQCISFIAYKPPSFTEA.

A chloroplast-targeting transit peptide spans 1–54 (MASSMFSSTAVVTSPAQATMVAPFTGLKSSASFPVTRKANNDITSITSNGGRVS).

This sequence belongs to the RuBisCO small chain family. Heterohexadecamer of 8 large and 8 small subunits.

Its subcellular location is the plastid. The protein localises to the chloroplast. Its function is as follows. RuBisCO catalyzes two reactions: the carboxylation of D-ribulose 1,5-bisphosphate, the primary event in carbon dioxide fixation, as well as the oxidative fragmentation of the pentose substrate. Both reactions occur simultaneously and in competition at the same active site. Although the small subunit is not catalytic it is essential for maximal activity. The polypeptide is Ribulose bisphosphate carboxylase small subunit 2B, chloroplastic (RBCS-2B) (Arabidopsis thaliana (Mouse-ear cress)).